The primary structure comprises 592 residues: Putative RING finger protein ORF9 (592 aa).

The segment at Cys12 to Arg49 adopts an RING-type zinc-finger fold. Residues Trp414–Leu441 are a coiled coil.

This Ostreid herpesvirus 1 (isolate France) (OsHV-1) protein is Putative RING finger protein ORF9.